A 597-amino-acid polypeptide reads, in one-letter code: Elongation factor 4 (597 aa).

The 183-residue stretch at 2-184 folds into the tr-type G domain; the sequence is KHIRNFSIIA…NIVTAIPPPE (183 aa). GTP-binding positions include 14-19 and 131-134; these read DHGKST and NKID.

The protein belongs to the TRAFAC class translation factor GTPase superfamily. Classic translation factor GTPase family. LepA subfamily.

Its subcellular location is the cell inner membrane. It carries out the reaction GTP + H2O = GDP + phosphate + H(+). Functionally, required for accurate and efficient protein synthesis under certain stress conditions. May act as a fidelity factor of the translation reaction, by catalyzing a one-codon backward translocation of tRNAs on improperly translocated ribosomes. Back-translocation proceeds from a post-translocation (POST) complex to a pre-translocation (PRE) complex, thus giving elongation factor G a second chance to translocate the tRNAs correctly. Binds to ribosomes in a GTP-dependent manner. The chain is Elongation factor 4 from Vibrio atlanticus (strain LGP32) (Vibrio splendidus (strain Mel32)).